The chain runs to 103 residues: MYAVIKTGGKQYRVAAGENIKVEQIAADVGQEIVIDQVLAVGNGAELKVGTPLVSGASVKATVVAHGKRDKVHIFKMRRRKHYQKRQGHRQQFTELHIGAIAV.

This sequence belongs to the bacterial ribosomal protein bL21 family. In terms of assembly, part of the 50S ribosomal subunit. Contacts protein L20.

This protein binds to 23S rRNA in the presence of protein L20. The protein is Large ribosomal subunit protein bL21 of Verminephrobacter eiseniae (strain EF01-2).